Here is a 371-residue protein sequence, read N- to C-terminus: Anhydro-N-acetylmuramic acid kinase (371 aa).

Residue 12-20 (GTVLDGNID) participates in ATP binding.

The protein belongs to the anhydro-N-acetylmuramic acid kinase family.

The enzyme catalyses 1,6-anhydro-N-acetyl-beta-muramate + ATP + H2O = N-acetyl-D-muramate 6-phosphate + ADP + H(+). Its pathway is amino-sugar metabolism; 1,6-anhydro-N-acetylmuramate degradation. It functions in the pathway cell wall biogenesis; peptidoglycan recycling. Catalyzes the specific phosphorylation of 1,6-anhydro-N-acetylmuramic acid (anhMurNAc) with the simultaneous cleavage of the 1,6-anhydro ring, generating MurNAc-6-P. Is required for the utilization of anhMurNAc either imported from the medium or derived from its own cell wall murein, and thus plays a role in cell wall recycling. This chain is Anhydro-N-acetylmuramic acid kinase, found in Rhizobium rhizogenes (strain K84 / ATCC BAA-868) (Agrobacterium radiobacter).